A 42-amino-acid chain; its full sequence is uncharacterized protein (42 aa).

A helical transmembrane segment spans residues phenylalanine 5–isoleucine 27.

The protein resides in the membrane. This is an uncharacterized protein from Saccharomyces cerevisiae (strain ATCC 204508 / S288c) (Baker's yeast).